The chain runs to 77 residues: Apelin (77 aa).

Residues 1–22 (MNLRRCVQALLLLWLCLSAVCG) form the signal peptide. Residues 23-41 (GPLLQTSDGKEMEEGTIRY) constitute a propeptide that is removed on maturation. The interval 43–77 (VQPRGPRSGPGPWQGGRRKFRRQRPRLSHKGPMPF) is disordered. Residues 58–71 (GRRKFRRQRPRLSH) are compositionally biased toward basic residues. A Pyrrolidone carboxylic acid modification is found at Q65.

The protein belongs to the apelin family. Post-translationally, at least 5 active peptides may be produced by proteolytic processing of the peptide precursor.

The protein localises to the secreted. The protein resides in the extracellular space. Functionally, peptide hormone that functions as endogenous ligand for the G-protein-coupled apelin receptor (APLNR/APJ), that plays a role in cadiovascular homeostasis. Functions as a balanced agonist activating both G(i) protein pathway and beta-arrestin pathway of APLNR. Downstream G proteins activation, apelin can inhibit cAMP production and activate key intracellular effectors such as ERKs. On the other hand, APLNR activation induces beta-arrestin recruitment to the membrane leading to desensitization and internalization of the receptor. Apelin blunts cardiac hypertrophic induction from APLNR on response to pathological stimuli, but also induces myocardial hypertrophy under normal conditions. Apelin-36 dissociates more hardly than (pyroglu)apelin-13 from APLNR. Involved in the regulation of cardiac precursor cell movements during gastrulation and heart morphogenesis. Has an inhibitory effect on cytokine production in response to T-cell receptor/CD3 cross-linking; the oral intake of apelin in the colostrum and the milk might therefore modulate immune responses in neonates. Plays a role in early coronary blood vessels formation. Mediates myocardial contractility in an ERK1/2-dependent manner. May also have a role in the central control of body fluid homeostasis by influencing vasopressin release and drinking behavior. This Bos taurus (Bovine) protein is Apelin (APLN).